We begin with the raw amino-acid sequence, 124 residues long: Small ribosomal subunit protein uS13 (124 aa).

The segment covering 94–117 (NLPVRGQRTRTNARTRKGPRKTVA) has biased composition (basic residues). The interval 94-124 (NLPVRGQRTRTNARTRKGPRKTVANKKIESK) is disordered.

This sequence belongs to the universal ribosomal protein uS13 family. As to quaternary structure, part of the 30S ribosomal subunit. Forms a loose heterodimer with protein S19. Forms two bridges to the 50S subunit in the 70S ribosome.

Functionally, located at the top of the head of the 30S subunit, it contacts several helices of the 16S rRNA. In the 70S ribosome it contacts the 23S rRNA (bridge B1a) and protein L5 of the 50S subunit (bridge B1b), connecting the 2 subunits; these bridges are implicated in subunit movement. Contacts the tRNAs in the A and P-sites. This Mycoplasma pneumoniae (strain ATCC 29342 / M129 / Subtype 1) (Mycoplasmoides pneumoniae) protein is Small ribosomal subunit protein uS13.